We begin with the raw amino-acid sequence, 1690 residues long: DNA-directed RNA polymerase subunit beta' (1690 aa).

4 residues coordinate Zn(2+): Cys63, Cys65, Cys78, and Cys81. Mg(2+) contacts are provided by Asp753, Asp755, and Asp757. Cys1107, Cys1295, Cys1302, and Cys1305 together coordinate Zn(2+).

This sequence belongs to the RNA polymerase beta' chain family. The RNAP catalytic core consists of 2 alpha, 1 beta, 1 beta' and 1 omega subunit. When a sigma factor is associated with the core the holoenzyme is formed, which can initiate transcription. Mg(2+) serves as cofactor. Zn(2+) is required as a cofactor.

It carries out the reaction RNA(n) + a ribonucleoside 5'-triphosphate = RNA(n+1) + diphosphate. Functionally, DNA-dependent RNA polymerase catalyzes the transcription of DNA into RNA using the four ribonucleoside triphosphates as substrates. The sequence is that of DNA-directed RNA polymerase subunit beta' from Thermotoga petrophila (strain ATCC BAA-488 / DSM 13995 / JCM 10881 / RKU-1).